Reading from the N-terminus, the 615-residue chain is MFPTRLDSSLAYDIAKAMMDGFNRHYRLFRTESARAKHRFETADWHGQQRAQRDRIEFYDLRVRECFMRLAREFKADEQPMEVWQQVKLHYIGLLVDHHQPELAETFFNSVTTKILHHSYFQNDFIFVRPAVSTEYIENDESETSPTYRSYYPTHDSLAEVLVQMVLDFDLRCPFADLDSDAARVQAAMVEQLGEVKLRANFQLQVLSGLFFRNKGCYIVGKLINGFNEFPFALPVLYGRAGQLVIDAVLFGEDDLLMLFSFARAYFMVDMEIPSAYVQYLRSMMPRKPRNEIYNALGLAKQGKTLFYRDFLHHQRHSTDKFRIAPGIKGMVMLVFDLPSFPYVFKVIKDFYPPPKDTTREQIKAKYLLVKQHDRVGRMADTLEYSEVGFPRARFDDELIAELEKFAPSQLEISDRDGDGRIEVIIKHVYIERRMIPLNIYLQEAFDAGGANPDDTSPAALRAREQIERGVIEYGNALKDLVAANIFPGDMLWKNFGITRHGKVVFYDYDEIEYITDCNFRKVPQARNEEDEMSGEVWYRVGPKDVFPETFAPFLLGNPFVREVFMKHHAELLDAAFWQSHKERIQAGHVYDVFPYDQGKRFHPEISDAQVPSSI.

Residues 325 to 331 (APGIKGM) and Lys-346 each bind ATP. Asp-381 is a catalytic residue.

This sequence belongs to the AceK family.

The protein localises to the cytoplasm. It carries out the reaction L-seryl-[isocitrate dehydrogenase] + ATP = O-phospho-L-seryl-[isocitrate dehydrogenase] + ADP + H(+). Functionally, bifunctional enzyme which can phosphorylate or dephosphorylate isocitrate dehydrogenase (IDH) on a specific serine residue. This is a regulatory mechanism which enables bacteria to bypass the Krebs cycle via the glyoxylate shunt in response to the source of carbon. When bacteria are grown on glucose, IDH is fully active and unphosphorylated, but when grown on acetate or ethanol, the activity of IDH declines drastically concomitant with its phosphorylation. This is Isocitrate dehydrogenase kinase/phosphatase from Albidiferax ferrireducens (strain ATCC BAA-621 / DSM 15236 / T118) (Rhodoferax ferrireducens).